The sequence spans 757 residues: Cellulose synthase-like protein B5 (757 aa).

The next 2 helical transmembrane spans lie at 24-44 (AVDL…ILHI) and 50-70 (VWLL…IFTC). Residues D136 and D460 contribute to the active site. The next 6 helical transmembrane spans lie at 531-551 (LAYF…YCLL), 572-592 (IVTL…SLGF), 613-633 (LFSI…GFVI), 671-691 (LFIP…GYLV), 704-724 (GSGL…LPFL), and 735-755 (IPLS…FFCV).

This sequence belongs to the glycosyltransferase 2 family. Plant cellulose synthase-like B subfamily. Expressed in young seedlings, primarily in the vascular tissue. Expressed in the root cap.

The protein localises to the golgi apparatus membrane. Its function is as follows. Thought to be a Golgi-localized beta-glycan synthase that polymerize the backbones of noncellulosic polysaccharides (hemicelluloses) of plant cell wall. The polypeptide is Cellulose synthase-like protein B5 (CSLB5) (Arabidopsis thaliana (Mouse-ear cress)).